A 297-amino-acid polypeptide reads, in one-letter code: Mycothiol acetyltransferase (297 aa).

N-acetyltransferase domains lie at 8 to 153 and 156 to 297; these read DALD…PPLP and VALR…QYAL. Glutamate 36 is a binding site for 1D-myo-inositol 2-(L-cysteinylamino)-2-deoxy-alpha-D-glucopyranoside. 80–82 is a binding site for acetyl-CoA; the sequence is LAV. 1D-myo-inositol 2-(L-cysteinylamino)-2-deoxy-alpha-D-glucopyranoside contacts are provided by glutamate 183, lysine 223, and glutamate 231. Acetyl-CoA contacts are provided by residues 235 to 237 and 242 to 248; these read VGV and QGGGLGK. 1D-myo-inositol 2-(L-cysteinylamino)-2-deoxy-alpha-D-glucopyranoside is bound at residue tyrosine 269. 274-279 lines the acetyl-CoA pocket; the sequence is NSPAVR.

Belongs to the acetyltransferase family. MshD subfamily. As to quaternary structure, monomer.

The catalysed reaction is 1D-myo-inositol 2-(L-cysteinylamino)-2-deoxy-alpha-D-glucopyranoside + acetyl-CoA = mycothiol + CoA + H(+). In terms of biological role, catalyzes the transfer of acetyl from acetyl-CoA to desacetylmycothiol (Cys-GlcN-Ins) to form mycothiol. This Actinosynnema mirum (strain ATCC 29888 / DSM 43827 / JCM 3225 / NBRC 14064 / NCIMB 13271 / NRRL B-12336 / IMRU 3971 / 101) protein is Mycothiol acetyltransferase.